The sequence spans 303 residues: Putative S-adenosyl-L-methionine-dependent methyltransferase MAB_0213c (303 aa).

S-adenosyl-L-methionine is bound by residues Asp126 and 155–156 (DL).

This sequence belongs to the UPF0677 family.

Exhibits S-adenosyl-L-methionine-dependent methyltransferase activity. In Mycobacteroides abscessus (strain ATCC 19977 / DSM 44196 / CCUG 20993 / CIP 104536 / JCM 13569 / NCTC 13031 / TMC 1543 / L948) (Mycobacterium abscessus), this protein is Putative S-adenosyl-L-methionine-dependent methyltransferase MAB_0213c.